We begin with the raw amino-acid sequence, 504 residues long: Anaerobic nitric oxide reductase transcription regulator NorR (504 aa).

Position 57 is a 4-aspartylphosphate (Asp-57). A Sigma-54 factor interaction domain is found at 187–416 (MIGLSPGMMQ…LEHAIHRAVV (230 aa)). ATP contacts are provided by residues 215–222 (GETGTGKE) and 278–287 (ADNGTLFLDE). The segment at residues 479 to 498 (WAACARALEMDVANLHRLAK) is a DNA-binding region (H-T-H motif).

It functions in the pathway nitrogen metabolism; nitric oxide reduction. In terms of biological role, required for the expression of anaerobic nitric oxide (NO) reductase, acts as a transcriptional activator for at least the norVW operon. Activation also requires sigma-54. The sequence is that of Anaerobic nitric oxide reductase transcription regulator NorR from Enterobacter sp. (strain 638).